Consider the following 315-residue polypeptide: Acetyl-coenzyme A carboxylase carboxyl transferase subunit alpha (315 aa).

Positions 36–289 (LSKKRLELME…RKAVAAELKI (254 aa)) constitute a CoA carboxyltransferase C-terminal domain.

It belongs to the AccA family. In terms of assembly, acetyl-CoA carboxylase is a heterohexamer composed of biotin carboxyl carrier protein (AccB), biotin carboxylase (AccC) and two subunits each of ACCase subunit alpha (AccA) and ACCase subunit beta (AccD).

Its subcellular location is the cytoplasm. It catalyses the reaction N(6)-carboxybiotinyl-L-lysyl-[protein] + acetyl-CoA = N(6)-biotinyl-L-lysyl-[protein] + malonyl-CoA. The protein operates within lipid metabolism; malonyl-CoA biosynthesis; malonyl-CoA from acetyl-CoA: step 1/1. Component of the acetyl coenzyme A carboxylase (ACC) complex. First, biotin carboxylase catalyzes the carboxylation of biotin on its carrier protein (BCCP) and then the CO(2) group is transferred by the carboxyltransferase to acetyl-CoA to form malonyl-CoA. This Francisella tularensis subsp. tularensis (strain FSC 198) protein is Acetyl-coenzyme A carboxylase carboxyl transferase subunit alpha.